A 209-amino-acid polypeptide reads, in one-letter code: U1 small nuclear ribonucleoprotein C (209 aa).

A Matrin-type zinc finger spans residues 4-36; that stretch reads HYCDYCDVFLTHDSASVRKAHNSGRNHLANVRD. Over residues 72-87 the composition is skewed to low complexity; sequence PQHLQAPPQGGFAPPM. Residues 72–209 form a disordered region; that stretch reads PQHLQAPPQG…RARMMGPGGR (138 aa). 2 stretches are compositionally biased toward pro residues: residues 93–150 and 159–191; these read GGFP…PFPP and PGAP…PTNP.

This sequence belongs to the U1 small nuclear ribonucleoprotein C family. U1 snRNP is composed of the 7 core Sm proteins B/B', D1, D2, D3, E, F and G that assemble in a heptameric protein ring on the Sm site of the small nuclear RNA to form the core snRNP, and at least 3 U1 snRNP-specific proteins U1-70K, U1-A and U1-C. U1-C interacts with U1 snRNA and the 5' splice-site region of the pre-mRNA.

It is found in the nucleus. Functionally, component of the spliceosomal U1 snRNP, which is essential for recognition of the pre-mRNA 5' splice-site and the subsequent assembly of the spliceosome. U1-C is directly involved in initial 5' splice-site recognition for both constitutive and regulated alternative splicing. The interaction with the 5' splice-site seems to precede base-pairing between the pre-mRNA and the U1 snRNA. Stimulates commitment or early (E) complex formation by stabilizing the base pairing of the 5' end of the U1 snRNA and the 5' splice-site region. The sequence is that of U1 small nuclear ribonucleoprotein C from Coprinopsis cinerea (strain Okayama-7 / 130 / ATCC MYA-4618 / FGSC 9003) (Inky cap fungus).